Consider the following 176-residue polypeptide: N5-carboxyaminoimidazole ribonucleotide mutase (176 aa).

Residues serine 14, aspartate 17, and arginine 44 each contribute to the substrate site.

Belongs to the AIR carboxylase family. Class I subfamily.

The enzyme catalyses 5-carboxyamino-1-(5-phospho-D-ribosyl)imidazole + H(+) = 5-amino-1-(5-phospho-D-ribosyl)imidazole-4-carboxylate. The protein operates within purine metabolism; IMP biosynthesis via de novo pathway; 5-amino-1-(5-phospho-D-ribosyl)imidazole-4-carboxylate from 5-amino-1-(5-phospho-D-ribosyl)imidazole (N5-CAIR route): step 2/2. Its function is as follows. Catalyzes the conversion of N5-carboxyaminoimidazole ribonucleotide (N5-CAIR) to 4-carboxy-5-aminoimidazole ribonucleotide (CAIR). This chain is N5-carboxyaminoimidazole ribonucleotide mutase, found in Synechocystis sp. (strain ATCC 27184 / PCC 6803 / Kazusa).